The chain runs to 95 residues: Large ribosomal subunit protein bL21 (95 aa).

The protein belongs to the bacterial ribosomal protein bL21 family. Part of the 50S ribosomal subunit. Contacts protein L20.

Functionally, this protein binds to 23S rRNA in the presence of protein L20. This is Large ribosomal subunit protein bL21 from Chlorobaculum tepidum (strain ATCC 49652 / DSM 12025 / NBRC 103806 / TLS) (Chlorobium tepidum).